The chain runs to 47 residues: uncharacterized protein (47 aa).

Positions 1–18 (MKKWLLIIAGALIISACA) are cleaved as a signal peptide. A disordered region spans residues 28-47 (EGSHSGVKFDKDSRQWGLNQ).

This is an uncharacterized protein from Haemophilus influenzae (strain ATCC 51907 / DSM 11121 / KW20 / Rd).